The following is a 661-amino-acid chain: Pentatricopeptide repeat-containing protein At5g66631 (661 aa).

9 PPR repeats span residues 139-173 (VHFS…GEEK), 176-210 (CTES…GGIP), 211-245 (NSRT…RITR), 246-280 (TLKH…GKFP), 410-444 (DAYT…GIKL), 445-475 (PFST…DRTL), 484-518 (LMLL…GVSP), 519-553 (DIQT…GLEP), and 554-588 (DPYM…NLMP).

Belongs to the PPR family. P subfamily.

This chain is Pentatricopeptide repeat-containing protein At5g66631, found in Arabidopsis thaliana (Mouse-ear cress).